A 359-amino-acid polypeptide reads, in one-letter code: Phospho-N-acetylmuramoyl-pentapeptide-transferase (359 aa).

Transmembrane regions (helical) follow at residues 3 to 23, 55 to 75, 80 to 100, 117 to 137, 156 to 176, 187 to 207, 231 to 251, 255 to 275, 280 to 300, and 334 to 354; these read QILI…PALI, VAII…GLAF, ISAS…VGFL, TAKT…ALGF, IATV…VVSA, LDGL…LITF, LAIV…WNAA, IFMG…ISVT, ILAV…VLQI, and FWLL…GEWL.

It belongs to the glycosyltransferase 4 family. MraY subfamily. The cofactor is Mg(2+).

Its subcellular location is the cell membrane. It carries out the reaction UDP-N-acetyl-alpha-D-muramoyl-L-alanyl-gamma-D-glutamyl-meso-2,6-diaminopimeloyl-D-alanyl-D-alanine + di-trans,octa-cis-undecaprenyl phosphate = di-trans,octa-cis-undecaprenyl diphospho-N-acetyl-alpha-D-muramoyl-L-alanyl-D-glutamyl-meso-2,6-diaminopimeloyl-D-alanyl-D-alanine + UMP. Its pathway is cell wall biogenesis; peptidoglycan biosynthesis. Functionally, catalyzes the initial step of the lipid cycle reactions in the biosynthesis of the cell wall peptidoglycan: transfers peptidoglycan precursor phospho-MurNAc-pentapeptide from UDP-MurNAc-pentapeptide onto the lipid carrier undecaprenyl phosphate, yielding undecaprenyl-pyrophosphoryl-MurNAc-pentapeptide, known as lipid I. In Mycolicibacterium paratuberculosis (strain ATCC BAA-968 / K-10) (Mycobacterium paratuberculosis), this protein is Phospho-N-acetylmuramoyl-pentapeptide-transferase.